Reading from the N-terminus, the 372-residue chain is N-methyl-L-tryptophan oxidase (372 aa).

4 to 34 is a binding site for FAD; sequence DLIIIGSGSVGAAAGYYATRAGLNVLMTDAH. Cys308 carries the S-8alpha-FAD cysteine modification.

This sequence belongs to the MSOX/MTOX family. MTOX subfamily. As to quaternary structure, monomer. Requires FAD as cofactor.

It catalyses the reaction N(alpha)-methyl-L-tryptophan + O2 + H2O = L-tryptophan + formaldehyde + H2O2. Catalyzes the oxidative demethylation of N-methyl-L-tryptophan. The sequence is that of N-methyl-L-tryptophan oxidase from Shigella boydii serotype 18 (strain CDC 3083-94 / BS512).